Reading from the N-terminus, the 147-residue chain is uncharacterized protein (147 aa).

Residues 4 to 120 form the CMP/dCMP-type deaminase domain; the sequence is KWAKRFFQMA…EQTEDFLSRW (117 aa). Position 67 (histidine 67) interacts with Zn(2+). Glutamate 69 functions as the Proton donor in the catalytic mechanism. 2 residues coordinate Zn(2+): cysteine 92 and cysteine 95.

Belongs to the cytidine and deoxycytidylate deaminase family. Requires Zn(2+) as cofactor.

This is an uncharacterized protein from Aliivibrio fischeri (Vibrio fischeri).